We begin with the raw amino-acid sequence, 341 residues long: Aromatic amino acid aminotransferase (341 aa).

Lys-213 carries the post-translational modification N6-(pyridoxal phosphate)lysine.

This sequence belongs to the class-II pyridoxal-phosphate-dependent aminotransferase family. As to quaternary structure, homodimer. Pyridoxal 5'-phosphate is required as a cofactor.

It catalyses the reaction an aromatic L-alpha-amino acid + 2-oxoglutarate = an aromatic oxo-acid + L-glutamate. Aminotransferase that catalyzes the conversion of aromatic amino acids and 2-oxoglutarate into corresponding aromatic oxo acids and L-glutamate. The sequence is that of Aromatic amino acid aminotransferase from Corynebacterium glutamicum (strain R).